Reading from the N-terminus, the 336-residue chain is Tetraacyldisaccharide 4'-kinase (336 aa).

60 to 67 contributes to the ATP binding site; the sequence is TAGGNGKT.

It belongs to the LpxK family.

The enzyme catalyses a lipid A disaccharide + ATP = a lipid IVA + ADP + H(+). It functions in the pathway glycolipid biosynthesis; lipid IV(A) biosynthesis; lipid IV(A) from (3R)-3-hydroxytetradecanoyl-[acyl-carrier-protein] and UDP-N-acetyl-alpha-D-glucosamine: step 6/6. Its function is as follows. Transfers the gamma-phosphate of ATP to the 4'-position of a tetraacyldisaccharide 1-phosphate intermediate (termed DS-1-P) to form tetraacyldisaccharide 1,4'-bis-phosphate (lipid IVA). The polypeptide is Tetraacyldisaccharide 4'-kinase (Vibrio cholerae serotype O1 (strain ATCC 39315 / El Tor Inaba N16961)).